The chain runs to 92 residues: MTTINLTSETLFNFPCDYHIKVLGKDCEALQRTIYSIVERYTDKLHPNQITKKHSSKGNYMSFSIHIIASSRIQLDAINQDLQDCHLVSYVL.

It belongs to the UPF0250 family.

This Ruthia magnifica subsp. Calyptogena magnifica protein is UPF0250 protein Rmag_0541.